A 392-amino-acid polypeptide reads, in one-letter code: MAENNVYGHEMKKHFMLDPDYVNVNNGSCGTESLAVYNKHVQLLKEAQSKPDFMCNAYMPMYMEATRNEVAKLIGADSSNIVFCNSATDGISTVLLTFPWEQNDEILMLNVAYPTCTYAADFAKNQHNLRLDVIDVGVEIDEDLFLKEVEQRFLQSKPRAFICDILSSMPVILFPWEKVVKLCKKYNIVSIIDGAHAIGHIPMNLANVDPDFLFTNAHKWLNSPAACTVLYVSAKNHNLIEALPLSYGYGLREKESIAVDTLTNRFVNSFKQDLPKFIAVGEAIKFRKSIGGEEKIQQYCHEIALKGAEIISKELGTSFIKPPYPVAMVNVEVPLRNIPSIETQKVFWPKYNTFLRFMEFKGKFYTRLSGAVYLEESDFYYIAKVIKDFCSL.

Lys-219 carries the post-translational modification N6-(pyridoxal phosphate)lysine.

Belongs to the class-V pyridoxal-phosphate-dependent aminotransferase family. EgtE subfamily. The cofactor is pyridoxal 5'-phosphate.

The protein localises to the cytoplasm. Its subcellular location is the nucleus. The enzyme catalyses S-(hercyn-2-yl)-L-cysteine S-oxide + AH2 + H(+) = ergothioneine + pyruvate + A + NH4(+). It participates in amino-acid biosynthesis; ergothioneine biosynthesis. In terms of biological role, catalyzes the conversion of hercynylcysteine sulfoxide to ergothioneine by cleaving the cysteine residue at the sulfur atom, the last step in the biosynthesis pathway of ergothioneine. The polypeptide is Hercynylcysteine sulfoxide lyase (Schizosaccharomyces pombe (strain 972 / ATCC 24843) (Fission yeast)).